We begin with the raw amino-acid sequence, 583 residues long: Inactive tyrosine-protein kinase RYK (583 aa).

The N-terminal stretch at 1 to 18 (MILRYLIFFAQLWALCLA) is a signal peptide. The Extracellular segment spans residues 19–173 (NVNMFISKEE…EVDDTDSIDK (155 aa)). A WIF domain is found at 22–147 (MFISKEEMNR…KVKLRQEKIC (126 aa)). Asparagine 30 and asparagine 46 each carry an N-linked (GlcNAc...) asparagine glycan. A disulfide bridge connects residues cysteine 113 and cysteine 147. Residues 174 to 194 (AFFVIICIAAAFLLIVAATLI) form a helical membrane-spanning segment. The Cytoplasmic segment spans residues 195–583 (CYFKRSKKED…DFNIQLSQYI (389 aa)). Residues 281 to 583 (FQSLPLDMEG…DFNIQLSQYI (303 aa)) form the Protein kinase domain. Residues 287–295 (DMEGTFGEV) and lysine 327 contribute to the ATP site.

It belongs to the protein kinase superfamily. Tyr protein kinase family.

Its subcellular location is the cell membrane. The protein localises to the basolateral cell membrane. Has no detectable kinase activity in vitro and is unlikely to function as a tyrosine kinase in vivo. Receptor which may act as a receptor for Wnt ligand mom-2. Plays a role in controlling P7.p vulva precursor cell lineage orientation during vulva development. Regulates pop-1 asymmetric distribution in P7.p and its daughter cells. Plays a role in the migration of ALM neurons during embryogenesis. This is Inactive tyrosine-protein kinase RYK from Caenorhabditis elegans.